The primary structure comprises 233 residues: Partner of Y14 and mago (233 aa).

The segment at 1 to 153 (MTTYSTDSQG…SNNSDSTVDE (153 aa)) is disordered. A coiled-coil region spans residues 62–97 (EVVQKAKEKRERERLRQAREEQQRKEQQNKKQQAGA). Over residues 65-90 (QKAKEKRERERLRQAREEQQRKEQQN) the composition is skewed to basic and acidic residues. Residues 122–142 (KQPQQHTKSSQQKSTTAAAAA) are compositionally biased toward low complexity. Residues 167 to 199 (ADAQQLEVAKKLRKLRKKIREIEAIETKLRSTD) are a coiled coil.

The protein belongs to the pym family. In terms of assembly, interacts (via N-terminus) with mago and tsu/Y14; the interaction is direct.

It localises to the cytoplasm. Its subcellular location is the nucleus. Functionally, regulator of the exon junction complex (EJC), a multiprotein complex that associates immediately upstream of the exon-exon junction on mRNAs and serves as a positional landmarks for the intron exon structure of genes and directs post-transcriptional processes in the cytoplasm such as mRNA export, nonsense-mediated mRNA decay (NMD) or translation. This chain is Partner of Y14 and mago, found in Anopheles gambiae (African malaria mosquito).